Consider the following 154-residue polypeptide: SsrA-binding protein (154 aa).

This sequence belongs to the SmpB family.

The protein localises to the cytoplasm. Functionally, required for rescue of stalled ribosomes mediated by trans-translation. Binds to transfer-messenger RNA (tmRNA), required for stable association of tmRNA with ribosomes. tmRNA and SmpB together mimic tRNA shape, replacing the anticodon stem-loop with SmpB. tmRNA is encoded by the ssrA gene; the 2 termini fold to resemble tRNA(Ala) and it encodes a 'tag peptide', a short internal open reading frame. During trans-translation Ala-aminoacylated tmRNA acts like a tRNA, entering the A-site of stalled ribosomes, displacing the stalled mRNA. The ribosome then switches to translate the ORF on the tmRNA; the nascent peptide is terminated with the 'tag peptide' encoded by the tmRNA and targeted for degradation. The ribosome is freed to recommence translation, which seems to be the essential function of trans-translation. In Staphylococcus saprophyticus subsp. saprophyticus (strain ATCC 15305 / DSM 20229 / NCIMB 8711 / NCTC 7292 / S-41), this protein is SsrA-binding protein.